The chain runs to 621 residues: Acetolactate synthase (621 aa).

Residues 1 to 19 are compositionally biased toward low complexity; that stretch reads MSAPTRRPAPDAPGAAGIA. Residues 1–39 form a disordered region; the sequence is MSAPTRRPAPDAPGAAGIAPAPPAPAAKPAAGKPKRIGP. Glutamate 89 lines the thiamine diphosphate pocket. Residues arginine 190, 296–317, and 339–358 each bind FAD; these read HGTVAAVAALQRSDLLIALGTR and DIDPAEIGKNRHADVPIVGD. The interval 432-512 is thiamine pyrophosphate binding; sequence HDQMWAAQFI…IKVALINNGN (81 aa). Mg(2+)-binding residues include aspartate 483 and asparagine 510.

This sequence belongs to the TPP enzyme family. It depends on Mg(2+) as a cofactor. Thiamine diphosphate serves as cofactor.

It carries out the reaction 2 pyruvate + H(+) = (2S)-2-acetolactate + CO2. It participates in amino-acid biosynthesis; L-isoleucine biosynthesis; L-isoleucine from 2-oxobutanoate: step 1/4. Its pathway is amino-acid biosynthesis; L-valine biosynthesis; L-valine from pyruvate: step 1/4. The polypeptide is Acetolactate synthase (ilvB) (Mycobacterium avium).